The following is a 285-amino-acid chain: Transcription factor LBX1 (285 aa).

The span at M1–L20 shows a compositional bias: basic and acidic residues. The segment at M1–F36 is disordered. The segment at residues R125–L184 is a DNA-binding region (homeobox). Positions E212 to D285 are disordered. Positions S218–G230 are enriched in gly residues. The segment covering C272 to D285 has biased composition (acidic residues).

Interacts with SKOR1 which acts as a transcriptional corepressor.

The protein resides in the nucleus. In terms of biological role, transcription factor required for the development of GABAergic interneurons in the dorsal horn of the spinal cord and migration and further development of hypaxial muscle precursor cells for limb muscles, diaphragm and hypoglossal cord. The sequence is that of Transcription factor LBX1 from Rattus norvegicus (Rat).